We begin with the raw amino-acid sequence, 362 residues long: Chorismate synthase (362 aa).

Residues Arg47 and Arg53 each contribute to the NADP(+) site. Residues 124–126 (RSS), Gly285, 300–304 (KPTAT), and Arg326 each bind FMN.

The protein belongs to the chorismate synthase family. Homotetramer. FMNH2 is required as a cofactor.

It carries out the reaction 5-O-(1-carboxyvinyl)-3-phosphoshikimate = chorismate + phosphate. It participates in metabolic intermediate biosynthesis; chorismate biosynthesis; chorismate from D-erythrose 4-phosphate and phosphoenolpyruvate: step 7/7. Functionally, catalyzes the anti-1,4-elimination of the C-3 phosphate and the C-6 proR hydrogen from 5-enolpyruvylshikimate-3-phosphate (EPSP) to yield chorismate, which is the branch point compound that serves as the starting substrate for the three terminal pathways of aromatic amino acid biosynthesis. This reaction introduces a second double bond into the aromatic ring system. This chain is Chorismate synthase, found in Cyanothece sp. (strain PCC 7425 / ATCC 29141).